The following is a 277-amino-acid chain: Glutamate racemase (277 aa).

Residues 13-14 (DS) and 45-46 (YG) each bind substrate. Cys-76 acts as the Proton donor/acceptor in catalysis. 77 to 78 (NT) provides a ligand contact to substrate. The active-site Proton donor/acceptor is the Cys-186. 187–188 (TH) is a binding site for substrate.

This sequence belongs to the aspartate/glutamate racemases family.

The enzyme catalyses L-glutamate = D-glutamate. Its pathway is cell wall biogenesis; peptidoglycan biosynthesis. Provides the (R)-glutamate required for cell wall biosynthesis. In Ralstonia nicotianae (strain ATCC BAA-1114 / GMI1000) (Ralstonia solanacearum), this protein is Glutamate racemase.